A 707-amino-acid chain; its full sequence is Kinesin-like protein KIN-13B (707 aa).

Residues 152–477 (KIKVVVRKRP…LRYADRVKSL (326 aa)) enclose the Kinesin motor domain. 243-250 (GQTGSGKT) lines the ATP pocket. Residues 619–656 (EHLNELLQEEEDLVSAHRKQVEETLDMIKEEMNLLVEA) are a coiled coil.

It belongs to the TRAFAC class myosin-kinesin ATPase superfamily. Kinesin family. KIN-13 subfamily.

This Oryza sativa subsp. japonica (Rice) protein is Kinesin-like protein KIN-13B.